Here is a 212-residue protein sequence, read N- to C-terminus: External core antigen (212 aa).

Residues 1–19 (MQLFHLCLIISCSCPTVQA) form the signal peptide. An HBEAG region spans residues 25 to 27 (GWL). The tract at residues 165-212 (NAPILSTLPETTVVRRRGRSPRRRTPSPRRRRSQSPRRRRSQSRESQC) is disordered. A compositionally biased stretch (basic residues) spans 178–205 (VRRRGRSPRRRTPSPRRRRSQSPRRRRS). The stretch at 184 to 190 (SPRRRTP) is one 1; half-length repeat. The tract at residues 184-206 (SPRRRTPSPRRRRSQSPRRRRSQ) is 3 X 8 AA repeats of S-P-R-R-R-R-S-Q. Positions 184-212 (SPRRRTPSPRRRRSQSPRRRRSQSRESQC) are excised as a propeptide. 2 repeat units span residues 191-198 (SPRRRRSQ) and 199-206 (SPRRRRSQ).

This sequence belongs to the orthohepadnavirus precore antigen family. In terms of assembly, homodimerizes. Post-translationally, phosphorylated. In terms of processing, cleaved by host furin.

Its subcellular location is the secreted. It localises to the host nucleus. May regulate immune response to the intracellular capsid in acting as a T-cell tolerogen, by having an immunoregulatory effect which prevents destruction of infected cells by cytotoxic T-cells. This immune regulation may predispose to chronicity during perinatal infections and prevent severe liver injury during adult infections. This is External core antigen from Hepatitis B virus genotype C subtype ayw (isolate China/Tibet127/2002) (HBV-C).